Consider the following 295-residue polypeptide: ATP synthase gamma chain (295 aa).

The protein belongs to the ATPase gamma chain family. In terms of assembly, F-type ATPases have 2 components, CF(1) - the catalytic core - and CF(0) - the membrane proton channel. CF(1) has five subunits: alpha(3), beta(3), gamma(1), delta(1), epsilon(1). CF(0) has three main subunits: a, b and c.

The protein resides in the cell inner membrane. Functionally, produces ATP from ADP in the presence of a proton gradient across the membrane. The gamma chain is believed to be important in regulating ATPase activity and the flow of protons through the CF(0) complex. The sequence is that of ATP synthase gamma chain from Sulfurovum sp. (strain NBC37-1).